The chain runs to 652 residues: Acetyl-coenzyme A synthetase (652 aa).

CoA is bound by residues 190 to 193 (RGGR) and Thr310. Residues 386–388 (GEP), 410–415 (DTWWQT), Asp499, and Arg514 each bind ATP. CoA is bound at residue Ser522. An ATP-binding site is contributed by Arg525. Positions 536, 538, and 541 each coordinate Mg(2+). Arg583 contacts CoA. An N6-acetyllysine modification is found at Lys608.

It belongs to the ATP-dependent AMP-binding enzyme family. Mg(2+) serves as cofactor. Acetylated. Deacetylation by the SIR2-homolog deacetylase activates the enzyme.

It carries out the reaction acetate + ATP + CoA = acetyl-CoA + AMP + diphosphate. Catalyzes the conversion of acetate into acetyl-CoA (AcCoA), an essential intermediate at the junction of anabolic and catabolic pathways. AcsA undergoes a two-step reaction. In the first half reaction, AcsA combines acetate with ATP to form acetyl-adenylate (AcAMP) intermediate. In the second half reaction, it can then transfer the acetyl group from AcAMP to the sulfhydryl group of CoA, forming the product AcCoA. The protein is Acetyl-coenzyme A synthetase of Methylorubrum extorquens (strain CM4 / NCIMB 13688) (Methylobacterium extorquens).